A 104-amino-acid polypeptide reads, in one-letter code: Ig lambda-3 chain C region (104 aa).

In terms of domain architecture, Ig-like spans 6-99; it reads PTLTMFPPSP…EGDTVEKSLS (94 aa). An intrachain disulfide couples Cys-27 to Cys-85.

The polypeptide is Ig lambda-3 chain C region (Iglc3) (Mus musculus (Mouse)).